The following is a 328-amino-acid chain: Tetraacyldisaccharide 4'-kinase (328 aa).

55–62 (TAGGNGKT) serves as a coordination point for ATP.

Belongs to the LpxK family.

It catalyses the reaction a lipid A disaccharide + ATP = a lipid IVA + ADP + H(+). It participates in glycolipid biosynthesis; lipid IV(A) biosynthesis; lipid IV(A) from (3R)-3-hydroxytetradecanoyl-[acyl-carrier-protein] and UDP-N-acetyl-alpha-D-glucosamine: step 6/6. Transfers the gamma-phosphate of ATP to the 4'-position of a tetraacyldisaccharide 1-phosphate intermediate (termed DS-1-P) to form tetraacyldisaccharide 1,4'-bis-phosphate (lipid IVA). This is Tetraacyldisaccharide 4'-kinase from Escherichia coli O81 (strain ED1a).